The sequence spans 359 residues: UDP-N-acetylglucosamine--N-acetylmuramyl-(pentapeptide) pyrophosphoryl-undecaprenol N-acetylglucosamine transferase (359 aa).

Residues threonine 15–glycine 17, asparagine 127, arginine 166, serine 191, isoleucine 245, alanine 264–glutamate 269, and glutamine 290 each bind UDP-N-acetyl-alpha-D-glucosamine.

Belongs to the glycosyltransferase 28 family. MurG subfamily.

Its subcellular location is the cell inner membrane. The enzyme catalyses di-trans,octa-cis-undecaprenyl diphospho-N-acetyl-alpha-D-muramoyl-L-alanyl-D-glutamyl-meso-2,6-diaminopimeloyl-D-alanyl-D-alanine + UDP-N-acetyl-alpha-D-glucosamine = di-trans,octa-cis-undecaprenyl diphospho-[N-acetyl-alpha-D-glucosaminyl-(1-&gt;4)]-N-acetyl-alpha-D-muramoyl-L-alanyl-D-glutamyl-meso-2,6-diaminopimeloyl-D-alanyl-D-alanine + UDP + H(+). The protein operates within cell wall biogenesis; peptidoglycan biosynthesis. In terms of biological role, cell wall formation. Catalyzes the transfer of a GlcNAc subunit on undecaprenyl-pyrophosphoryl-MurNAc-pentapeptide (lipid intermediate I) to form undecaprenyl-pyrophosphoryl-MurNAc-(pentapeptide)GlcNAc (lipid intermediate II). The polypeptide is UDP-N-acetylglucosamine--N-acetylmuramyl-(pentapeptide) pyrophosphoryl-undecaprenol N-acetylglucosamine transferase (Pseudomonas putida (strain W619)).